The following is a 273-amino-acid chain: Large ribosomal subunit protein uL2 (273 aa).

Disordered stretches follow at residues 28 to 53 (KPFA…TTRH) and 221 to 273 (RGTA…RRSK). Residues 39-48 (KSGGRNNNGR) show a composition bias toward low complexity. Residue Lys-242 is modified to N6-acetyllysine.

The protein belongs to the universal ribosomal protein uL2 family. Part of the 50S ribosomal subunit. Forms a bridge to the 30S subunit in the 70S ribosome.

One of the primary rRNA binding proteins. Required for association of the 30S and 50S subunits to form the 70S ribosome, for tRNA binding and peptide bond formation. It has been suggested to have peptidyltransferase activity; this is somewhat controversial. Makes several contacts with the 16S rRNA in the 70S ribosome. This chain is Large ribosomal subunit protein uL2, found in Shigella dysenteriae serotype 1 (strain Sd197).